The primary structure comprises 147 residues: Large ribosomal subunit protein uL16 (147 aa).

Belongs to the universal ribosomal protein uL16 family. Part of the 50S ribosomal subunit.

In terms of biological role, binds 23S rRNA and is also seen to make contacts with the A and possibly P site tRNAs. This Clostridium acetobutylicum (strain ATCC 824 / DSM 792 / JCM 1419 / IAM 19013 / LMG 5710 / NBRC 13948 / NRRL B-527 / VKM B-1787 / 2291 / W) protein is Large ribosomal subunit protein uL16.